The sequence spans 381 residues: E3 ubiquitin-protein ligase RNF13 (381 aa).

The N-terminal stretch at 1–34 (MLLSIGMLMLSATQIYTIVTVQLFAFLNLLPVEA) is a signal peptide. Residues 35 to 182 (DILAYNFENG…IPEFSLPLEY (148 aa)) are Lumenal-facing. One can recognise a PA domain in the interval 64-160 (LKGFLINSKP…GEASANSLKE (97 aa)). An N-linked (GlcNAc...) asparagine glycan is attached at Asn88. The chain crosses the membrane as a helical span at residues 183 to 203 (YLIPFLIIVGICLILIVIFMI). Residues 204–381 (TKFVQDRHRA…ERDYRVTNTV (178 aa)) are Cytoplasmic-facing. The RING-type; atypical zinc-finger motif lies at 240 to 282 (CAICLDEYEDGDKLRILPCSHAYHCKCVDPWLTKTKKTCPVCK). The segment at 285–381 (VVPSQGDSDS…ERDYRVTNTV (97 aa)) is disordered. Acidic residues-rich tracts occupy residues 292-305 (SDSETDSSQEENEV) and 339-353 (SEYEEDDNDNIDSSD). The span at 370–381 (NDERDYRVTNTV) shows a compositional bias: basic and acidic residues.

Widely expressed (at protein level). Lowest levels in the liver, moderate levels in the heart, intestine and spleen, and high levels in skeletal muscle, kidney, proventriculus and brain. Also expressed in inner ear after noise exposure.

The protein localises to the endoplasmic reticulum membrane. It localises to the late endosome membrane. It is found in the lysosome membrane. The protein resides in the nucleus inner membrane. It catalyses the reaction S-ubiquitinyl-[E2 ubiquitin-conjugating enzyme]-L-cysteine + [acceptor protein]-L-lysine = [E2 ubiquitin-conjugating enzyme]-L-cysteine + N(6)-ubiquitinyl-[acceptor protein]-L-lysine.. Its pathway is protein modification; protein ubiquitination. Functionally, E3 ubiquitin-protein ligase that regulates cell proliferation. Involved in apoptosis regulation. Mediates ER stress-induced activation of JNK signaling pathway and apoptosis by promoting ERN1 activation and splicing of XBP1 mRNA. This chain is E3 ubiquitin-protein ligase RNF13, found in Gallus gallus (Chicken).